Consider the following 171-residue polypeptide: 6,7-dimethyl-8-ribityllumazine synthase (171 aa).

5-amino-6-(D-ribitylamino)uracil is bound by residues phenylalanine 24, 58–60 (ALE), and 82–84 (AVI). 87-88 (ET) contacts (2S)-2-hydroxy-3-oxobutyl phosphate. Histidine 90 (proton donor) is an active-site residue. Asparagine 115 serves as a coordination point for 5-amino-6-(D-ribitylamino)uracil. A (2S)-2-hydroxy-3-oxobutyl phosphate-binding site is contributed by arginine 129. The segment at 150–171 (ALDQLGDDEDEEEDEDDEEERA) is disordered. Residues 154–171 (LGDDEDEEEDEDDEEERA) are compositionally biased toward acidic residues.

It belongs to the DMRL synthase family.

It catalyses the reaction (2S)-2-hydroxy-3-oxobutyl phosphate + 5-amino-6-(D-ribitylamino)uracil = 6,7-dimethyl-8-(1-D-ribityl)lumazine + phosphate + 2 H2O + H(+). The protein operates within cofactor biosynthesis; riboflavin biosynthesis; riboflavin from 2-hydroxy-3-oxobutyl phosphate and 5-amino-6-(D-ribitylamino)uracil: step 1/2. Functionally, catalyzes the formation of 6,7-dimethyl-8-ribityllumazine by condensation of 5-amino-6-(D-ribitylamino)uracil with 3,4-dihydroxy-2-butanone 4-phosphate. This is the penultimate step in the biosynthesis of riboflavin. The sequence is that of 6,7-dimethyl-8-ribityllumazine synthase from Burkholderia cenocepacia (strain HI2424).